A 124-amino-acid chain; its full sequence is Membrane magnesium transporter 2 (124 aa).

Position 1 (M1) is a topological domain, cytoplasmic. A helical transmembrane segment spans residues 2-22 (VAWLWKVLVGVGLSALAHAAF). Over 23–44 (SAAQHRSHTRLAEMKYEPLPTD) the chain is Lumenal. The helical transmembrane segment at 45-65 (IVLQTLLAFALTCYGVVHTAG) threads the bilayer. Over 66-124 (DFRDRDATSELKNVTFDTLRNRPSFYVFQHSGSSLLQPSDTTRSSNLNVPSSDDIRLKF) the chain is Cytoplasmic.

Belongs to the membrane magnesium transporter (TC 1.A.67) family.

Its subcellular location is the golgi apparatus membrane. It localises to the early endosome membrane. Mediates Mg(2+) transport. In Rattus norvegicus (Rat), this protein is Membrane magnesium transporter 2.